Reading from the N-terminus, the 166-residue chain is MASIEKQTGELQEKLIAVNRVSKTVKGGRIMSFTALTVVGDGNGRVGFGYGKAREVPAAIQKAMEKARRNMITVALNEGTLQHPIKGSHTGSRVFMQPASEGTGIIAGGAMRAVLEVAGVRNVLSKAYGSTNPINVVRATIDALANMKSPEMVAAKRGKTVDEILG.

The region spanning 11-74 (LQEKLIAVNR…EKARRNMITV (64 aa)) is the S5 DRBM domain.

This sequence belongs to the universal ribosomal protein uS5 family. In terms of assembly, part of the 30S ribosomal subunit. Contacts proteins S4 and S8.

Functionally, with S4 and S12 plays an important role in translational accuracy. Its function is as follows. Located at the back of the 30S subunit body where it stabilizes the conformation of the head with respect to the body. The sequence is that of Small ribosomal subunit protein uS5 from Histophilus somni (strain 2336) (Haemophilus somnus).